The sequence spans 117 residues: Ribonuclease P protein component (117 aa).

This sequence belongs to the RnpA family. Consists of a catalytic RNA component (M1 or rnpB) and a protein subunit.

It carries out the reaction Endonucleolytic cleavage of RNA, removing 5'-extranucleotides from tRNA precursor.. Functionally, RNaseP catalyzes the removal of the 5'-leader sequence from pre-tRNA to produce the mature 5'-terminus. It can also cleave other RNA substrates such as 4.5S RNA. The protein component plays an auxiliary but essential role in vivo by binding to the 5'-leader sequence and broadening the substrate specificity of the ribozyme. This is Ribonuclease P protein component from Nocardioides sp. (strain ATCC BAA-499 / JS614).